The sequence spans 136 residues: MPSVYRPLVNFVAKAMQAVLNLALLCLGIILVVFLGKETLHLAHVLFTPEPVSKYKLVEGLVVYFLYFEFIALIVKYFESGFHFPLRYFVYIGITAIVRLIIVDHESPLAVLIYSAAILILVITLWLCNSNRLKRE.

Helical transmembrane passes span 15–35 (AMQA…VVFL), 58–78 (VEGL…VKYF), 82–102 (FHFP…RLII), and 108–128 (PLAV…LWLC).

It belongs to the PsiE family.

The protein localises to the cell inner membrane. The chain is Protein PsiE homolog from Klebsiella pneumoniae subsp. pneumoniae (strain ATCC 700721 / MGH 78578).